A 148-amino-acid polypeptide reads, in one-letter code: MKYQKLENQEANWKWIYLIRKHREGENITRYEERSLQEAKAQELLESQNYPSQIEEWIKNHLSPALPIKLDQAIRARRKRFFNGEKQHTKKKSIDLEYAVWLRLSKYSRKMKMTLSETITYMIDERESKAQFENQMAAMKTSLKNLLK.

The protein belongs to the MatP family. Homodimer.

Its subcellular location is the cytoplasm. Functionally, required for spatial organization of the terminus region of the chromosome (Ter macrodomain) during the cell cycle. Prevents early segregation of duplicated Ter macrodomains during cell division. Binds specifically to matS, which is a 13 bp signature motif repeated within the Ter macrodomain. This chain is Macrodomain Ter protein, found in Haemophilus influenzae (strain PittGG).